A 384-amino-acid chain; its full sequence is DNA replication and repair protein RecF (384 aa).

43 to 50 serves as a coordination point for ATP; the sequence is GENGSGKT.

The protein belongs to the RecF family.

It localises to the cytoplasm. Functionally, the RecF protein is involved in DNA metabolism; it is required for DNA replication and normal SOS inducibility. RecF binds preferentially to single-stranded, linear DNA. It also seems to bind ATP. This Brucella abortus (strain 2308) protein is DNA replication and repair protein RecF.